We begin with the raw amino-acid sequence, 158 residues long: 6,7-dimethyl-8-ribityllumazine synthase (158 aa).

5-amino-6-(D-ribitylamino)uracil is bound by residues phenylalanine 23, 61-63 (SFE), and 85-87 (AVI). Residue 90–91 (ET) participates in (2S)-2-hydroxy-3-oxobutyl phosphate binding. The Proton donor role is filled by histidine 93. 5-amino-6-(D-ribitylamino)uracil is bound at residue phenylalanine 118. Arginine 132 is a binding site for (2S)-2-hydroxy-3-oxobutyl phosphate.

This sequence belongs to the DMRL synthase family.

The catalysed reaction is (2S)-2-hydroxy-3-oxobutyl phosphate + 5-amino-6-(D-ribitylamino)uracil = 6,7-dimethyl-8-(1-D-ribityl)lumazine + phosphate + 2 H2O + H(+). Its pathway is cofactor biosynthesis; riboflavin biosynthesis; riboflavin from 2-hydroxy-3-oxobutyl phosphate and 5-amino-6-(D-ribitylamino)uracil: step 1/2. Its function is as follows. Catalyzes the formation of 6,7-dimethyl-8-ribityllumazine by condensation of 5-amino-6-(D-ribitylamino)uracil with 3,4-dihydroxy-2-butanone 4-phosphate. This is the penultimate step in the biosynthesis of riboflavin. The polypeptide is 6,7-dimethyl-8-ribityllumazine synthase (Prochlorococcus marinus (strain MIT 9301)).